An 885-amino-acid polypeptide reads, in one-letter code: Alanine--tRNA ligase (885 aa).

Zn(2+)-binding residues include His-574, His-578, Cys-676, and His-680.

Belongs to the class-II aminoacyl-tRNA synthetase family. The cofactor is Zn(2+).

Its subcellular location is the cytoplasm. The catalysed reaction is tRNA(Ala) + L-alanine + ATP = L-alanyl-tRNA(Ala) + AMP + diphosphate. Functionally, catalyzes the attachment of alanine to tRNA(Ala) in a two-step reaction: alanine is first activated by ATP to form Ala-AMP and then transferred to the acceptor end of tRNA(Ala). Also edits incorrectly charged Ser-tRNA(Ala) and Gly-tRNA(Ala) via its editing domain. This is Alanine--tRNA ligase from Syntrophobacter fumaroxidans (strain DSM 10017 / MPOB).